The chain runs to 337 residues: MKFVDSATISIQAGDGGRGCVSFRREKFVPKGGPDGGDGGRGGHIYLRANKQLATLLDFRYRKQYLATRGAHGQGSRKTGKDGSDIVIEIPCGTLVKNAQTHELIADLTEDGQEMLVARGGKGGRGNQHFATPTRQAPRYAEPGLKGEAFELEMELKLMADVGLVGFPNAGKSTLISVLSAAKPKIADYPFTTLVPNLGIVRYEEYKSFVMADIPGIIEGAAEGKGLGLQFLRHIERTKILVVLVAADAADIALEYQTLVQELEKFDSGLLLKPRIAVITKMDIASEDMVVPELEGVKLLMISSVTGKGLKELKDELWRQVSTCSRSEDQPLDEHLG.

The region spanning Met-1 to Met-159 is the Obg domain. The 163-residue stretch at Ala-160–Ser-322 folds into the OBG-type G domain. Residues Gly-166–Ser-173, Phe-191–Val-195, Asp-213–Gly-216, Thr-280–Asp-283, and Ser-303–Val-305 each bind GTP. Mg(2+) is bound by residues Ser-173 and Thr-193.

It belongs to the TRAFAC class OBG-HflX-like GTPase superfamily. OBG GTPase family. In terms of assembly, monomer. Requires Mg(2+) as cofactor.

The protein localises to the cytoplasm. Its function is as follows. An essential GTPase which binds GTP, GDP and possibly (p)ppGpp with moderate affinity, with high nucleotide exchange rates and a fairly low GTP hydrolysis rate. Plays a role in control of the cell cycle, stress response, ribosome biogenesis and in those bacteria that undergo differentiation, in morphogenesis control. This is GTPase Obg from Chlorobium phaeobacteroides (strain DSM 266 / SMG 266 / 2430).